The following is a 786-amino-acid chain: m7GpppN-mRNA hydrolase dcap-2 (786 aa).

Residues 25–61 (QKQNKSTEEPPSSVQKLLASLQQAQNKSDLSEQPSTS) show a composition bias toward polar residues. Residues 25-148 (QKQNKSTEEP…QQQQQYKGPR (124 aa)) form a disordered region. Residues 62–72 (KPKKNEKRKKA) are compositionally biased toward basic residues. Polar residues-rich tracts occupy residues 101-111 (MQQQAENARIS) and 118-133 (QVSTSKGSSRNTTAPE). Residues 134–144 (QQNYQQQQQQY) are compositionally biased toward low complexity. Residues 238–366 (STVPTYGAIL…LPAYLQGNKF (129 aa)) enclose the Nudix hydrolase domain. Residues 273 to 294 (GKINQAEPPRDAAIRETFEETG) carry the Nudix box motif. Glu288 and Glu292 together coordinate Mg(2+). Disordered stretches follow at residues 556–576 (IMHSPNHPLPPTSNSPATPTA) and 623–655 (ISSTQKQSIPKATAAPPSTEKTRSASLSGSSQV). Composition is skewed to polar residues over residues 623–632 (ISSTQKQSIP) and 646–655 (SASLSGSSQV).

It belongs to the Nudix hydrolase family. DCP2 subfamily. In terms of assembly, may be a component of the decapping complex composed of dcap-1 and dcap-2. Mg(2+) is required as a cofactor. Mn(2+) serves as cofactor. Expressed in sensory neurons.

The protein localises to the cytoplasmic granule. The protein resides in the cytoplasm. It is found in the perinuclear region. It catalyses the reaction a 5'-end (N(7)-methyl 5'-triphosphoguanosine)-ribonucleoside in mRNA + H2O = N(7)-methyl-GDP + a 5'-end phospho-ribonucleoside in mRNA + 2 H(+). It carries out the reaction a 5'-end (N(2),N(2),N(7)-trimethyl 5'-triphosphoguanosine)-ribonucleoside in mRNA + H2O = N(2),N(2),N(7)-trimethyl-GDP + a 5'-end phospho-ribonucleoside in mRNA + 2 H(+). Its activity is regulated as follows. Inhibited by capped and uncapped RNA. Not inhibited by dinucleotide cap or methylated nucleotide analogs. Its function is as follows. Decapping metalloenzyme that catalyzes the cleavage of the cap structure on mRNAs. Removes the 7-methyl guanine cap structure from mRNA molecules, yielding a 5'-phosphorylated mRNA fragment and 7m-GDP. RNA-decapping enzyme although it does not bind the RNA cap. May contribute to gene regulation in multiple RNA pathways including monomethylguanosine- and trimethylguanosine-capped RNAs. In oocytes, may play a role in the response to stress induced by heat shock, osmotic stress and anoxia. Required for the developmental axon guidance and regrowth of PLM touch receptor neurons. Early in embryogenesis, plays a role in ciliary shape formation in sensory neurons. Promotes survival at high temperatures. The chain is m7GpppN-mRNA hydrolase dcap-2 from Caenorhabditis elegans.